A 412-amino-acid polypeptide reads, in one-letter code: Argininosuccinate synthase (412 aa).

ATP-binding positions include 12–20 (AYSGGLDTS) and Ala39. Residues Tyr91 and Ser96 each contribute to the L-citrulline site. Gly121 serves as a coordination point for ATP. 3 residues coordinate L-aspartate: Thr123, Asn127, and Asp128. An L-citrulline-binding site is contributed by Asn127. 5 residues coordinate L-citrulline: Arg131, Ser180, Ser189, Glu265, and Tyr277.

Belongs to the argininosuccinate synthase family. Type 1 subfamily. As to quaternary structure, homotetramer.

The protein resides in the cytoplasm. It catalyses the reaction L-citrulline + L-aspartate + ATP = 2-(N(omega)-L-arginino)succinate + AMP + diphosphate + H(+). Its pathway is amino-acid biosynthesis; L-arginine biosynthesis; L-arginine from L-ornithine and carbamoyl phosphate: step 2/3. The polypeptide is Argininosuccinate synthase (Pseudoalteromonas atlantica (strain T6c / ATCC BAA-1087)).